We begin with the raw amino-acid sequence, 335 residues long: tRNA N6-adenosine threonylcarbamoyltransferase (335 aa).

Residues His111, His115, and Tyr132 each contribute to the Fe cation site. Substrate is bound by residues 132 to 136 (YVSGG), Asp164, Gly177, Glu181, and Asn260. Asp288 provides a ligand contact to Fe cation.

Belongs to the KAE1 / TsaD family. Monomer. Component of the KEOPS complex that consists of Kae1, Bud32, Cgi121 and Pcc1; the whole complex dimerizes. Fe(2+) is required as a cofactor.

The protein localises to the cytoplasm. It catalyses the reaction L-threonylcarbamoyladenylate + adenosine(37) in tRNA = N(6)-L-threonylcarbamoyladenosine(37) in tRNA + AMP + H(+). Required for the formation of a threonylcarbamoyl group on adenosine at position 37 (t(6)A37) in tRNAs that read codons beginning with adenine. Is a component of the KEOPS complex that is probably involved in the transfer of the threonylcarbamoyl moiety of threonylcarbamoyl-AMP (TC-AMP) to the N6 group of A37. Kae1 likely plays a direct catalytic role in this reaction, but requires other protein(s) of the complex to fulfill this activity. This chain is tRNA N6-adenosine threonylcarbamoyltransferase, found in Methanococcoides burtonii (strain DSM 6242 / NBRC 107633 / OCM 468 / ACE-M).